The chain runs to 668 residues: DNA ligase (668 aa).

NAD(+) contacts are provided by residues 37–41 (DAIYD), 86–87 (SL), and Glu-116. Catalysis depends on Lys-118, which acts as the N6-AMP-lysine intermediate. NAD(+) contacts are provided by Arg-139, Glu-176, Lys-289, and Lys-313. Residues Cys-407, Cys-410, Cys-425, and Cys-430 each coordinate Zn(2+). Residues 586 to 668 (AQSSALAGLT…RALIETREMP (83 aa)) enclose the BRCT domain.

It belongs to the NAD-dependent DNA ligase family. LigA subfamily. Mg(2+) is required as a cofactor. The cofactor is Mn(2+).

The enzyme catalyses NAD(+) + (deoxyribonucleotide)n-3'-hydroxyl + 5'-phospho-(deoxyribonucleotide)m = (deoxyribonucleotide)n+m + AMP + beta-nicotinamide D-nucleotide.. DNA ligase that catalyzes the formation of phosphodiester linkages between 5'-phosphoryl and 3'-hydroxyl groups in double-stranded DNA using NAD as a coenzyme and as the energy source for the reaction. It is essential for DNA replication and repair of damaged DNA. This Gloeobacter violaceus (strain ATCC 29082 / PCC 7421) protein is DNA ligase.